Here is a 643-residue protein sequence, read N- to C-terminus: MPLNFKPGDLVFAKMKGYPHWPARIDDVKDGAVKPPPNKYPIFFYGTHETAFLAPKDLFPYEKCKDKYGKPNKRKGFNEGLWEIQNNPQASYSLPPASVSSSDSDVPEEKSTARSDGEEEQETGQAILPTAGVSSSDEEGSDKGGVKRKGRTTTPPSAKRTKHSSSEQEPDSASSSEEENSDSDQDFTPEKSTPRIQRRTTNLGKKNKIFAESDSKSDESEDEKKEEEQKKSPSSSSASSPSLSSSDSEAPVKKTPRGRRPAEKPAPKPRGRGRKAEPIPSSDSSDSDSSVDRISEWKKRDEERRRELEERRKKEQEEQLRRLREEEREEEERKKREKAEKGDKSDSDSDSSKSEVIAPPKPKKSSSSSDSEEDKKPVKEVKPVASEIKKGKKEKVRAISDDSDSDKKVKKTIKKTRPSESARKTNQKEKRGERPRGRPSKVEKEKKKPEVITARKVVKKEPTVEEKLQKLHSEIKFALKVDNPDIQKCLDALEELGGLQVTSQILQKNTDVVATLKKIRRYKANQSVMDKAAEVYSRIKARILGPKLESQQKTVQKVNTAEKDPEEEKQTGKVEEDMDASVNGDFLSQRIETAGDKEQDGEGQNLDNKTEMETKQNNHAEHNSNPTEETIECRLISSENQTS.

Residues 7 to 64 (PGDLVFAKMKGYPHWPARIDDVKDGAVKPPPNKYPIFFYGTHETAFLAPKDLFPYEKC) enclose the PWWP domain. Disordered regions lie at residues 88 to 450 (PQAS…KKPE) and 548 to 643 (LESQ…NQTS). Positions 90–104 (ASYSLPPASVSSSDS) are enriched in low complexity. Positions 107–116 (PEEKSTARSD) are enriched in basic and acidic residues. Over residues 176–187 (SEEENSDSDQDF) the composition is skewed to acidic residues. Residues 194–204 (PRIQRRTTNLG) are compositionally biased toward polar residues. Residues 209–231 (IFAESDSKSDESEDEKKEEEQKK) show a composition bias toward basic and acidic residues. Positions 232–249 (SPSSSSASSPSLSSSDSE) are enriched in low complexity. Composition is skewed to basic and acidic residues over residues 290–353 (SVDR…DSSK), 373–382 (EDKKPVKEVK), and 417–450 (RPSE…KKPE). Residues 295 to 345 (SEWKKRDEERRRELEERRKKEQEEQLRRLREEEREEEERKKREKAEKGDKS) adopt a coiled-coil conformation. The segment covering 549-559 (ESQQKTVQKVN) has biased composition (polar residues). Composition is skewed to basic and acidic residues over residues 560–575 (TAEK…GKVE) and 608–622 (NKTE…HAEH).

It belongs to the HDGF family.

It is found in the nucleus. The protein resides in the cytoplasm. May act as a regulator of myogenesis. Promotes the repair of DNA double-strand breaks (DSBs) through the homologous recombination pathway by facilitating the recruitment of the DNA endonuclease RBBP8 to the DSBs. The protein is Hepatoma-derived growth factor-related protein 2 (hdgfl2) of Xenopus tropicalis (Western clawed frog).